Here is a 224-residue protein sequence, read N- to C-terminus: Ribosomal RNA small subunit methyltransferase G (224 aa).

S-adenosyl-L-methionine is bound by residues glycine 89, leucine 94, 140–141, and arginine 154; that span reads IE.

Belongs to the methyltransferase superfamily. RNA methyltransferase RsmG family.

It localises to the cytoplasm. It catalyses the reaction guanosine(527) in 16S rRNA + S-adenosyl-L-methionine = N(7)-methylguanosine(527) in 16S rRNA + S-adenosyl-L-homocysteine. In terms of biological role, specifically methylates the N7 position of guanine in position 527 of 16S rRNA. The polypeptide is Ribosomal RNA small subunit methyltransferase G (Bordetella avium (strain 197N)).